Reading from the N-terminus, the 168-residue chain is tRNA-splicing endonuclease subunit Sen15 (168 aa).

The tract at residues Met1–Pro32 is disordered. Phosphoserine is present on residues Ser7 and Ser165.

It belongs to the SEN15 family. Homodimer. tRNA splicing endonuclease is a heterotetramer composed of TSEN2, TSEN15, TSEN34/LENG5 and TSEN54. tRNA splicing endonuclease complex also contains proteins of the pre-mRNA 3' end processing machinery such as CLP1, CPSF1, CPSF4 and CSTF2.

The protein resides in the nucleus. The protein localises to the nucleolus. In terms of biological role, non-catalytic subunit of the tRNA-splicing endonuclease complex, a complex responsible for identification and cleavage of the splice sites in pre-tRNA. It cleaves pre-tRNA at the 5' and 3' splice sites to release the intron. The products are an intron and two tRNA half-molecules bearing 2',3' cyclic phosphate and 5'-OH termini. There are no conserved sequences at the splice sites, but the intron is invariably located at the same site in the gene, placing the splice sites an invariant distance from the constant structural features of the tRNA body. The tRNA splicing endonuclease is also involved in mRNA processing via its association with pre-mRNA 3'-end processing factors, establishing a link between pre-tRNA splicing and pre-mRNA 3'-end formation, suggesting that the endonuclease subunits function in multiple RNA-processing events. The chain is tRNA-splicing endonuclease subunit Sen15 (Tsen15) from Mus musculus (Mouse).